A 573-amino-acid polypeptide reads, in one-letter code: Urease subunit alpha 2 (573 aa).

One can recognise a Urease domain in the interval 135–573 (GGMDTHVHYI…ISLNQLYFFS (439 aa)). His-140, His-142, and Lys-223 together coordinate Ni(2+). N6-carboxylysine is present on Lys-223. His-225 lines the substrate pocket. Positions 252 and 278 each coordinate Ni(2+). The Proton donor role is filled by His-326. Asp-366 contributes to the Ni(2+) binding site.

The protein belongs to the metallo-dependent hydrolases superfamily. Urease alpha subunit family. In terms of assembly, heterotrimer of UreA (gamma), UreB (beta) and UreC (alpha) subunits. Three heterotrimers associate to form the active enzyme. The cofactor is Ni cation. Post-translationally, carboxylation allows a single lysine to coordinate two nickel ions.

Its subcellular location is the cytoplasm. It carries out the reaction urea + 2 H2O + H(+) = hydrogencarbonate + 2 NH4(+). The protein operates within nitrogen metabolism; urea degradation; CO(2) and NH(3) from urea (urease route): step 1/1. Functionally, disrupting the ure2 operon has no effect on urease activity or pathogen survival in BALB/c mice when administered orally. The polypeptide is Urease subunit alpha 2 (Brucella abortus (strain 2308)).